The primary structure comprises 355 residues: 3-isopropylmalate dehydrogenase (355 aa).

The substrate site is built by arginine 98, arginine 108, arginine 132, and aspartate 223. Mg(2+) contacts are provided by aspartate 223, aspartate 247, and aspartate 251. 283–295 contributes to the NAD(+) binding site; sequence GSAPDIAGQQKAD.

Belongs to the isocitrate and isopropylmalate dehydrogenases family. LeuB type 2 subfamily. Homodimer. The cofactor is Mg(2+). It depends on Mn(2+) as a cofactor.

The protein resides in the cytoplasm. It catalyses the reaction (2R,3S)-3-isopropylmalate + NAD(+) = 4-methyl-2-oxopentanoate + CO2 + NADH. It functions in the pathway amino-acid biosynthesis; L-leucine biosynthesis; L-leucine from 3-methyl-2-oxobutanoate: step 3/4. In terms of biological role, catalyzes the oxidation of 3-carboxy-2-hydroxy-4-methylpentanoate (3-isopropylmalate) to 3-carboxy-4-methyl-2-oxopentanoate. The product decarboxylates to 4-methyl-2 oxopentanoate. This Clavibacter sepedonicus (Clavibacter michiganensis subsp. sepedonicus) protein is 3-isopropylmalate dehydrogenase.